The following is a 281-amino-acid chain: Pantothenate synthetase (281 aa).

30–37 serves as a coordination point for ATP; that stretch reads MGYLHEGH. The active-site Proton donor is the His37. A (R)-pantoate-binding site is contributed by Gln61. Gln61 lines the beta-alanine pocket. 147–150 contributes to the ATP binding site; that stretch reads GQKD. Residue Gln153 participates in (R)-pantoate binding. ATP contacts are provided by residues Val176 and 184-187; that span reads MSSR.

This sequence belongs to the pantothenate synthetase family. As to quaternary structure, homodimer.

It localises to the cytoplasm. It carries out the reaction (R)-pantoate + beta-alanine + ATP = (R)-pantothenate + AMP + diphosphate + H(+). The protein operates within cofactor biosynthesis; (R)-pantothenate biosynthesis; (R)-pantothenate from (R)-pantoate and beta-alanine: step 1/1. In terms of biological role, catalyzes the condensation of pantoate with beta-alanine in an ATP-dependent reaction via a pantoyl-adenylate intermediate. The chain is Pantothenate synthetase from Heliobacterium modesticaldum (strain ATCC 51547 / Ice1).